The chain runs to 163 residues: Pheromone-binding protein (163 aa).

An N-terminal signal peptide occupies residues 1–22 (MMSVRLMLVVAVWLCLRVDASQ). Intrachain disulfides connect Cys39-Cys74, Cys70-Cys129, and Cys117-Cys138.

Belongs to the PBP/GOBP family. As to expression, antenna.

In terms of biological role, this major soluble protein in olfactory sensilla of male moths might serve to solubilize the extremely hydrophobic pheromone molecules and to transport pheromone through the aqueous lymph to receptors located on olfactory cilia. The polypeptide is Pheromone-binding protein (Heliothis virescens (Tobacco budworm moth)).